Consider the following 21-residue polypeptide: C-phycocyanin alpha subunit (21 aa).

Belongs to the phycobiliprotein family. In terms of assembly, heterodimer of an alpha and a beta subunit, which further assembles into trimers and the trimers into hexamers. In terms of processing, contains one covalently linked bilin chromophore.

It localises to the cellular thylakoid membrane. Functionally, light-harvesting photosynthetic bile pigment-protein from the phycobiliprotein complex (phycobilisome, PBS). Phycocyanin is the major phycobiliprotein in the PBS rod. In Anabaena sp. (strain L31), this protein is C-phycocyanin alpha subunit.